Here is a 324-residue protein sequence, read N- to C-terminus: Ribose-phosphate pyrophosphokinase (324 aa).

ATP-binding positions include 45-47 and 104-105; these read NGE and RQ. Positions 138 and 178 each coordinate Mg(2+). Residue Lys-201 is part of the active site. D-ribose 5-phosphate-binding positions include Arg-203, Asp-229, and 233–237; that span reads DTGGT.

This sequence belongs to the ribose-phosphate pyrophosphokinase family. Class I subfamily. Homohexamer. It depends on Mg(2+) as a cofactor.

It is found in the cytoplasm. The catalysed reaction is D-ribose 5-phosphate + ATP = 5-phospho-alpha-D-ribose 1-diphosphate + AMP + H(+). The protein operates within metabolic intermediate biosynthesis; 5-phospho-alpha-D-ribose 1-diphosphate biosynthesis; 5-phospho-alpha-D-ribose 1-diphosphate from D-ribose 5-phosphate (route I): step 1/1. Involved in the biosynthesis of the central metabolite phospho-alpha-D-ribosyl-1-pyrophosphate (PRPP) via the transfer of pyrophosphoryl group from ATP to 1-hydroxyl of ribose-5-phosphate (Rib-5-P). This Streptomyces coelicolor (strain ATCC BAA-471 / A3(2) / M145) protein is Ribose-phosphate pyrophosphokinase.